A 289-amino-acid polypeptide reads, in one-letter code: Agmatinase (289 aa).

Mn(2+) contacts are provided by H112, D135, H137, D139, D216, and D218.

This sequence belongs to the arginase family. Agmatinase subfamily. It depends on Mn(2+) as a cofactor.

It carries out the reaction agmatine + H2O = urea + putrescine. It functions in the pathway amine and polyamine biosynthesis; putrescine biosynthesis via agmatine pathway; putrescine from agmatine: step 1/1. Catalyzes the formation of putrescine from agmatine. The sequence is that of Agmatinase (speB) from Halalkalibacterium halodurans (strain ATCC BAA-125 / DSM 18197 / FERM 7344 / JCM 9153 / C-125) (Bacillus halodurans).